Reading from the N-terminus, the 326-residue chain is Lipoyl synthase (326 aa).

Residues Cys74, Cys79, Cys85, Cys100, Cys104, Cys107, and Ser314 each contribute to the [4Fe-4S] cluster site. The 219-residue stretch at 85-303 (CFGKGTATFM…EEEAYKMGFT (219 aa)) folds into the Radical SAM core domain.

The protein belongs to the radical SAM superfamily. Lipoyl synthase family. Requires [4Fe-4S] cluster as cofactor.

The protein localises to the cytoplasm. The enzyme catalyses [[Fe-S] cluster scaffold protein carrying a second [4Fe-4S](2+) cluster] + N(6)-octanoyl-L-lysyl-[protein] + 2 oxidized [2Fe-2S]-[ferredoxin] + 2 S-adenosyl-L-methionine + 4 H(+) = [[Fe-S] cluster scaffold protein] + N(6)-[(R)-dihydrolipoyl]-L-lysyl-[protein] + 4 Fe(3+) + 2 hydrogen sulfide + 2 5'-deoxyadenosine + 2 L-methionine + 2 reduced [2Fe-2S]-[ferredoxin]. It functions in the pathway protein modification; protein lipoylation via endogenous pathway; protein N(6)-(lipoyl)lysine from octanoyl-[acyl-carrier-protein]: step 2/2. Catalyzes the radical-mediated insertion of two sulfur atoms into the C-6 and C-8 positions of the octanoyl moiety bound to the lipoyl domains of lipoate-dependent enzymes, thereby converting the octanoylated domains into lipoylated derivatives. The sequence is that of Lipoyl synthase from Delftia acidovorans (strain DSM 14801 / SPH-1).